The sequence spans 967 residues: Translation initiation factor IF-2 (967 aa).

A disordered region spans residues 34 to 363 (ASSTVEPPVA…APAVGGVSVP (330 aa)). Composition is skewed to low complexity over residues 51–96 (PAGG…GNAA) and 103–154 (ASEA…TPGP). Residues 184–196 (RSEGGAQRGGPRP) are compositionally biased toward gly residues. A compositionally biased stretch (low complexity) spans 197-206 (GGQQRSGKPG). Gly residues predominate over residues 300–333 (PRRGGGPGGGPGGGGGFRGRGGRGGTQGAFGRGG). Residues 334–345 (ARGKHRKSKRAK) are compositionally biased toward basic residues. A tr-type G domain is found at 460–632 (PRPPVVTVMG…IVLTADGALE (173 aa)). A G1 region spans residues 469–476 (GHVDHGKT). Position 469–476 (469–476 (GHVDHGKT)) interacts with GTP. Residues 494 to 498 (GITQH) form a G2 region. A G3 region spans residues 519 to 522 (DTPG). GTP contacts are provided by residues 519–523 (DTPGH) and 573–576 (NKVD). The tract at residues 573-576 (NKVD) is G4. The segment at 609 to 611 (SAR) is G5.

Belongs to the TRAFAC class translation factor GTPase superfamily. Classic translation factor GTPase family. IF-2 subfamily.

The protein localises to the cytoplasm. Its function is as follows. One of the essential components for the initiation of protein synthesis. Protects formylmethionyl-tRNA from spontaneous hydrolysis and promotes its binding to the 30S ribosomal subunits. Also involved in the hydrolysis of GTP during the formation of the 70S ribosomal complex. The protein is Translation initiation factor IF-2 of Kocuria rhizophila (strain ATCC 9341 / DSM 348 / NBRC 103217 / DC2201).